The following is a 1109-amino-acid chain: Pesticidal crystal protein Cry28Aa (1109 aa).

It belongs to the delta endotoxin family.

In terms of biological role, promotes colloidosmotic lysis by binding to the midgut epithelial cells of insects. This is Pesticidal crystal protein Cry28Aa (cry28Aa) from Bacillus thuringiensis subsp. finitimus.